Consider the following 778-residue polypeptide: Ral guanine nucleotide dissociation stimulator-like 2 (778 aa).

Residues 1-15 show a composition bias toward low complexity; sequence MLPRPLRLLLDTTPP. Positions 1 to 59 are disordered; sequence MLPRPLRLLLDTTPPGGVVLSSFRSRDPEEGGDPGGRAVGGGQEEEDEEEEEASVSVWD. Positions 33-42 are enriched in gly residues; the sequence is DPGGRAVGGG. Acidic residues predominate over residues 43-59; it reads QEEEDEEEEEASVSVWD. In terms of domain architecture, N-terminal Ras-GEF spans 88–212; the sequence is SSRRLRAGTL…GSADLIRNLR (125 aa). Residues 243-513 enclose the Ras-GEF domain; sequence LADHLAEQLT…HRVSCEVEPP (271 aa). 4 disordered regions span residues 503–524, 541–564, 581–647, and 735–769; these read SHRVSCEVEPPGTSDSPAARTP, GGPTPLVSWDRPSVGGDEVPGTPA, SLDS…GPGS, and RRPSAATPGSHSGPSASGTPPSEGGGGSFPRIKAT. Residues 581–592 show a composition bias toward low complexity; the sequence is SLDSALESSPSL. Over residues 620 to 632 the composition is skewed to polar residues; the sequence is CGSPLSGNTGEGT. One can recognise a Ras-associating domain in the interval 649–736; the sequence is DCRIIRVQME…HDFLLRQRRR (88 aa). Over residues 738 to 756 the composition is skewed to low complexity; that stretch reads SAATPGSHSGPSASGTPPS.

In terms of assembly, interacts with SAMD9.

Probable guanine nucleotide exchange factor. Putative effector of Ras and/or Rap. Associates with the GTP-bound form of Rap 1A and H-Ras in vitro. This chain is Ral guanine nucleotide dissociation stimulator-like 2 (Rgl2), found in Mus musculus (Mouse).